The chain runs to 245 residues: MTSSRPIAHNTKNKQTKTLKGRDYAVFLQKLGYTFKQPDLLREALTHRSLGFPNNERFEFLGDSVLNCAVSTLLFKRFPSLPEGDLTRLRANFVNQQALHRLASALGIGELILLGEGERKSGGHHRPSILANAVEAIIGAIYLESGFAVVEQVIVALYEPLIRQLDPDTSGKDSKTLLQEYLQSRKIALPEYSVLLAQGDPHAQVFHVECVIPGFGIRTRGEGTSRRRAEQEAARQAYELAIVRH.

Positions 24–146 constitute an RNase III domain; that stretch reads YAVFLQKLGY…IIGAIYLESG (123 aa). Position 59 (Glu59) interacts with Mg(2+). Asp63 is a catalytic residue. The Mg(2+) site is built by Asn132 and Glu135. The active site involves Glu135. The DRBM domain occupies 173-243; that stretch reads DSKTLLQEYL…ARQAYELAIV (71 aa).

The protein belongs to the ribonuclease III family. In terms of assembly, homodimer. Mg(2+) is required as a cofactor.

It is found in the cytoplasm. It carries out the reaction Endonucleolytic cleavage to 5'-phosphomonoester.. Functionally, digests double-stranded RNA. Involved in the processing of primary rRNA transcript to yield the immediate precursors to the large and small rRNAs (23S and 16S). Processes some mRNAs, and tRNAs when they are encoded in the rRNA operon. Processes pre-crRNA and tracrRNA of type II CRISPR loci if present in the organism. The polypeptide is Ribonuclease 3 (Nitrosomonas europaea (strain ATCC 19718 / CIP 103999 / KCTC 2705 / NBRC 14298)).